A 240-amino-acid polypeptide reads, in one-letter code: Protein FAM246C (240 aa).

Disordered regions lie at residues Met-1–Ala-117 and Leu-161–Ala-240. Basic and acidic residues-rich tracts occupy residues Glu-19–Pro-31 and Ala-60–Glu-74. Over residues Ser-165–Ala-175 the composition is skewed to pro residues. The segment covering Ala-176–Ala-187 has biased composition (low complexity).

The protein belongs to the FAM246 family.

This Homo sapiens (Human) protein is Protein FAM246C.